The primary structure comprises 94 residues: Ribonuclease P protein component 1 (94 aa).

The protein belongs to the eukaryotic/archaeal RNase P protein component 1 family. Consists of a catalytic RNA component and at least 4-5 protein subunits.

It localises to the cytoplasm. The catalysed reaction is Endonucleolytic cleavage of RNA, removing 5'-extranucleotides from tRNA precursor.. Part of ribonuclease P, a protein complex that generates mature tRNA molecules by cleaving their 5'-ends. This is Ribonuclease P protein component 1 from Thermofilum pendens (strain DSM 2475 / Hrk 5).